The chain runs to 944 residues: Translation initiation factor IF-2 (944 aa).

Positions 55–81 (LTGQAAAPAAAPSSAPRPGARSSAPKP) are enriched in low complexity. Residues 55 to 329 (LTGQAAAPAA…RTKRAEFELR (275 aa)) form a disordered region. Residues 82–92 (GGRPTPGPQPT) are compositionally biased toward pro residues. The segment covering 93–107 (AAPEVEAPEASDVPV) has biased composition (low complexity). Over residues 123-135 (ASRKAAAEEKAQA) the composition is skewed to basic and acidic residues. 2 stretches are compositionally biased toward low complexity: residues 136–153 (EKSA…ETPS) and 211–222 (GQRPAAGAAGPR). Residues 223–236 (PAAPRPGSPRPGAP) are compositionally biased toward pro residues. The segment covering 244–257 (GARPAGFGQRPAGA) has biased composition (low complexity). The segment covering 258-269 (GRPGGAPGGAGR) has biased composition (gly residues). Over residues 270–283 (PGAPAAGGFQRPAG) the composition is skewed to low complexity. Positions 284–310 (GFAGRPGGGGRGRGPGGGTAGAFGRGG) are enriched in gly residues. Residues 311–322 (GKSKSRKSKRTK) show a composition bias toward basic residues. The tr-type G domain maps to 437-611 (IRPPVVTVMG…LTADAGLDLR (175 aa)). The tract at residues 446-453 (GHVDHGKT) is G1. 446-453 (GHVDHGKT) provides a ligand contact to GTP. The segment at 471–475 (GITQH) is G2. Positions 496–499 (DTPG) are G3. Residues 496–500 (DTPGH) and 550–553 (NKVD) each bind GTP. The tract at residues 550–553 (NKVD) is G4. Residues 586-588 (SAL) form a G5 region.

This sequence belongs to the TRAFAC class translation factor GTPase superfamily. Classic translation factor GTPase family. IF-2 subfamily.

Its subcellular location is the cytoplasm. In terms of biological role, one of the essential components for the initiation of protein synthesis. Protects formylmethionyl-tRNA from spontaneous hydrolysis and promotes its binding to the 30S ribosomal subunits. Also involved in the hydrolysis of GTP during the formation of the 70S ribosomal complex. The protein is Translation initiation factor IF-2 of Clavibacter michiganensis subsp. michiganensis (strain NCPPB 382).